The sequence spans 495 residues: MEFLKKLEVWFVVGSQDLYGDEALKQVNANAEQITRYLNDQNPFIQIKLKPLATTPEDILSLCQAANYEENCVGVIAWMHTFSPAKMWIGGLTRLNKPLLQFHTQLNKNIPWNEIDMDYMNLHQTAHGDREFGFMVSRFRKPRTIVVGHWQSESVKQKLDRWMRVLAAIYDQQHLKVARFGDNMREVAVTEGDKVEAQIKFGYSVNGYGLYQLVNSINTVNDEDITALVKEYEASYQLADSLKDGGEKRQSLIDSARIELGLKAFLDKGGFKAFTDTFQNLAGIKQLPGLPVQRLMAQGYGFGAEGDWKTAALVRAIKVMSYGLPNGCSFMEDYTYNLDDNNEIVLGAHMLEVCPSIANNKPILDIKPLGIGGKEDPARLIFTSKSGKATASTIVDLGNRFRMITADMQAVDKPQDMPNLPVGHAFWKLEPNFDIGTQAWILSGGAHHNVFSLDIDADMLRTFAEYFDIEFIHINVKTELPNLKNELRWNEAAYK.

Mn(2+) is bound by residues E305, E332, H349, and H448.

The protein belongs to the arabinose isomerase family. It depends on Mn(2+) as a cofactor.

The enzyme catalyses beta-L-arabinopyranose = L-ribulose. The protein operates within carbohydrate degradation; L-arabinose degradation via L-ribulose; D-xylulose 5-phosphate from L-arabinose (bacterial route): step 1/3. Its function is as follows. Catalyzes the conversion of L-arabinose to L-ribulose. This is L-arabinose isomerase from Mannheimia succiniciproducens (strain KCTC 0769BP / MBEL55E).